The sequence spans 518 residues: Membrane-bound lytic murein transglycosylase F (518 aa).

Residues 1-21 (MKKLKINYLFIGILALLLAVA) form the signal peptide. The tract at residues 22-269 (LWPSIPWFGK…RIEEKYLGHG (248 aa)) is non-LT domain. An LT domain region spans residues 270–518 (DDFDYVDTRT…SRKGSEEKQN (249 aa)). E314 is an active-site residue.

In the N-terminal section; belongs to the bacterial solute-binding protein 3 family. This sequence in the C-terminal section; belongs to the transglycosylase Slt family.

It localises to the cell outer membrane. It catalyses the reaction Exolytic cleavage of the (1-&gt;4)-beta-glycosidic linkage between N-acetylmuramic acid (MurNAc) and N-acetylglucosamine (GlcNAc) residues in peptidoglycan, from either the reducing or the non-reducing ends of the peptidoglycan chains, with concomitant formation of a 1,6-anhydrobond in the MurNAc residue.. In terms of biological role, murein-degrading enzyme that degrades murein glycan strands and insoluble, high-molecular weight murein sacculi, with the concomitant formation of a 1,6-anhydromuramoyl product. Lytic transglycosylases (LTs) play an integral role in the metabolism of the peptidoglycan (PG) sacculus. Their lytic action creates space within the PG sacculus to allow for its expansion as well as for the insertion of various structures such as secretion systems and flagella. This is Membrane-bound lytic murein transglycosylase F from Escherichia coli O157:H7.